The sequence spans 455 residues: MSQRKYFGTDGIRGHVGLSNINPEFVLKLGWAVGCVLANGARKKVVIGKDTRVSGYMLESALEAGLSAAGVDVALLGPMPTPGIAYLTQTLRANAGIVISASHNLFEDNGIKFFSADGGKLPDSVELAIEAQLEKQLQTVPSAKLGKATRINDAAGRYIEFCKSTIPSLSRLSNLKIVVDCANGATYHIAPNVFSELGADVVPIGIKPDGFNINQECGSTAPELLREKVIAVGADIGIGLDGDGDRVILVDSLGNLVDGDQIIYIIAKDRHQRGVLHGGVVGTLMSNYGLELAITSLGVPFQRSKVGDRYVLETLREKDWKIGGETSGHIVCLDKTTTGDGIVAALQVLSIMVKQNKALHELTAGIQLLPQTLVNLKTNNAALLASNPDVIQAVKNLEKHLNGEGRVLLRPSGTEPLLRVMVEGANASIVKQQAQMLCDDISQIDKKMTESLPST.

Ser-102 acts as the Phosphoserine intermediate in catalysis. Mg(2+) is bound by residues Ser-102, Asp-241, Asp-243, and Asp-245. At Ser-102 the chain carries Phosphoserine.

This sequence belongs to the phosphohexose mutase family. Mg(2+) serves as cofactor. In terms of processing, activated by phosphorylation.

The catalysed reaction is alpha-D-glucosamine 1-phosphate = D-glucosamine 6-phosphate. Functionally, catalyzes the conversion of glucosamine-6-phosphate to glucosamine-1-phosphate. This Legionella pneumophila (strain Paris) protein is Phosphoglucosamine mutase.